Here is a 410-residue protein sequence, read N- to C-terminus: Arginine deiminase (410 aa).

Residue C400 is the Amidino-cysteine intermediate of the active site.

The protein belongs to the arginine deiminase family.

Its subcellular location is the cytoplasm. The catalysed reaction is L-arginine + H2O = L-citrulline + NH4(+). It functions in the pathway amino-acid degradation; L-arginine degradation via ADI pathway; carbamoyl phosphate from L-arginine: step 1/2. The chain is Arginine deiminase from Lactococcus lactis subsp. cremoris (strain MG1363).